The sequence spans 166 residues: Heavy metal-associated isoprenylated plant protein 45 (166 aa).

One can recognise an HMA domain in the interval 15-78 (LSIVELLVDM…MVKRTGRTAE (64 aa)). A metal cation-binding residues include Cys-26 and Cys-29. Position 163 is a cysteine methyl ester (Cys-163). A lipid anchor (S-farnesyl cysteine) is attached at Cys-163. A propeptide spans 164 to 166 (TIM) (removed in mature form).

This sequence belongs to the HIPP family.

Its function is as follows. Heavy-metal-binding protein. In Arabidopsis thaliana (Mouse-ear cress), this protein is Heavy metal-associated isoprenylated plant protein 45.